The sequence spans 811 residues: Glycerol-3-phosphate acyltransferase (811 aa).

An HXXXXD motif motif is present at residues 305 to 310 (CHRSHI).

Belongs to the GPAT/DAPAT family.

Its subcellular location is the cell inner membrane. It carries out the reaction sn-glycerol 3-phosphate + an acyl-CoA = a 1-acyl-sn-glycero-3-phosphate + CoA. Its pathway is phospholipid metabolism; CDP-diacylglycerol biosynthesis; CDP-diacylglycerol from sn-glycerol 3-phosphate: step 1/3. This chain is Glycerol-3-phosphate acyltransferase, found in Histophilus somni (strain 129Pt) (Haemophilus somnus).